The primary structure comprises 564 residues: Homeobox protein unc-62 (564 aa).

Disordered stretches follow at residues 40-59, 216-270, 293-313, 328-397, and 455-503; these read NEQF…ADPA, ERAS…VMGG, SSSS…LHST, PSTC…KVPK, and IDQN…PSSL. Residues 133–218 form the MEIS N-terminal domain; that stretch reads SSDVCSSASF…PLDIVGDERA (86 aa). Positions 219–230 are enriched in low complexity; it reads SSSQPPMSPGSM. 2 stretches are compositionally biased toward polar residues: residues 328–344 and 381–390; these read PSTC…TPLS and LSDSANGSQN. Positions 392–454 form a DNA-binding region, homeobox; TALE-type; it reads KRKVPKVFSK…NARRRIVQPM (63 aa). Composition is skewed to polar residues over residues 455-469 and 494-503; these read IDQN…QMNV and ANYSPDPSSL.

The protein belongs to the TALE/MEIS homeobox family. Forms a heterodimer with homeobox ceh-60.

The protein resides in the nucleus. Functionally, acts redundantly with ceh-20 and ceh-40 to perform overlapping roles during embryogenesis. Required for postembryonic development of the ectoderm, including the Q, V and P cell lineages, playing a crucial role in ensuring that these cells and their descendants undergo their invariant patterns of cell division, migration, fusion and morphogenesis. Has a role in the mig-13 pathway to promote anterior migration of neuroblasts in the Q lineage. Required for multiple roles in regulating vulva development. Associates with homeobox ceh-60 to regulate gene expression, including repression of genes involved in innate immunity and activation of genes involved in vitellogenesis. Involved in lipid homeostasis, contributing to the formation of the cuticle. This Caenorhabditis elegans protein is Homeobox protein unc-62 (unc-62).